Consider the following 290-residue polypeptide: Bifunctional protein FolD 1 (290 aa).

NADP(+) contacts are provided by residues Gly-164–Ser-166, Ile-193, and Ile-236.

It belongs to the tetrahydrofolate dehydrogenase/cyclohydrolase family. As to quaternary structure, homodimer.

It carries out the reaction (6R)-5,10-methylene-5,6,7,8-tetrahydrofolate + NADP(+) = (6R)-5,10-methenyltetrahydrofolate + NADPH. It catalyses the reaction (6R)-5,10-methenyltetrahydrofolate + H2O = (6R)-10-formyltetrahydrofolate + H(+). The protein operates within one-carbon metabolism; tetrahydrofolate interconversion. Catalyzes the oxidation of 5,10-methylenetetrahydrofolate to 5,10-methenyltetrahydrofolate and then the hydrolysis of 5,10-methenyltetrahydrofolate to 10-formyltetrahydrofolate. This chain is Bifunctional protein FolD 1, found in Geobacter metallireducens (strain ATCC 53774 / DSM 7210 / GS-15).